Reading from the N-terminus, the 189-residue chain is Large ribosomal subunit protein eL18 (189 aa).

Belongs to the eukaryotic ribosomal protein eL18 family.

It is found in the cytoplasm. The chain is Large ribosomal subunit protein eL18 (RpL18) from Drosophila pseudoobscura pseudoobscura (Fruit fly).